The chain runs to 157 residues: Protein-export protein SecB (157 aa).

Belongs to the SecB family. Homotetramer, a dimer of dimers. One homotetramer interacts with 1 SecA dimer.

Its subcellular location is the cytoplasm. Its function is as follows. One of the proteins required for the normal export of preproteins out of the cell cytoplasm. It is a molecular chaperone that binds to a subset of precursor proteins, maintaining them in a translocation-competent state. It also specifically binds to its receptor SecA. The sequence is that of Protein-export protein SecB from Alcanivorax borkumensis (strain ATCC 700651 / DSM 11573 / NCIMB 13689 / SK2).